The chain runs to 32 residues: Chlorophyll a-b binding protein 2, chloroplastic (32 aa).

Chlorophyll a is bound by residues E19 and H22. Chlorophyll b is bound at residue R24.

It belongs to the light-harvesting chlorophyll a/b-binding (LHC) protein family. The LHC complex consists of chlorophyll a-b binding proteins. Binds at least 14 chlorophylls (8 Chl-a and 6 Chl-b) and carotenoids such as lutein and neoxanthin. is required as a cofactor. In terms of processing, photoregulated by reversible phosphorylation of its threonine residues.

It localises to the plastid. The protein localises to the chloroplast thylakoid membrane. In terms of biological role, the light-harvesting complex (LHC) functions as a light receptor, it captures and delivers excitation energy to photosystems with which it is closely associated. The sequence is that of Chlorophyll a-b binding protein 2, chloroplastic from Populus euphratica (Euphrates poplar).